The sequence spans 368 residues: Protein ALTERED XYLOGLUCAN 9 (368 aa).

Over 1–32 (MLGAIHLGVLAACFVLFVPMAMAGWHLSRNKM) the chain is Cytoplasmic. A helical transmembrane segment spans residues 33–53 (LFFSGALFISLAVCVHLTPYF). Residues 54–368 (PSVSDIVASV…ALLIESHQSL (315 aa)) lie on the Lumenal side of the membrane. N-linked (GlcNAc...) asparagine glycans are attached at residues asparagine 99, asparagine 137, and asparagine 235.

The protein localises to the golgi apparatus membrane. In terms of biological role, component of the plant cell wall polysaccharide acetylation pathway. Does not directly catalyze O-acetylation of xyloglucan but exhibits weak acetylesterase activity in vitro. The chain is Protein ALTERED XYLOGLUCAN 9 from Arabidopsis thaliana (Mouse-ear cress).